The chain runs to 255 residues: ATP-dependent L-serine kinase (255 aa).

E36 is a catalytic residue. Position 74 (V74) interacts with O-phospho-L-serine. A Mg(2+)-binding site is contributed by D75. The O-phospho-L-serine site is built by G76, H77, H78, W108, K234, T236, and H238.

It belongs to the SerK family. Mg(2+) serves as cofactor.

The catalysed reaction is L-serine + ATP = O-phospho-L-serine + ADP + H(+). Functionally, free serine kinase that uses ATP to phosphorylate L-serine to yield O-phospho-L-serine and ADP. The chain is ATP-dependent L-serine kinase from Desulfurococcus mucosus (strain ATCC 35584 / DSM 2162 / JCM 9187 / O7/1).